Consider the following 310-residue polypeptide: tRNA-cytidine(32) 2-sulfurtransferase (310 aa).

The short motif at 48-53 (SGGKDS) is the PP-loop motif element. [4Fe-4S] cluster is bound by residues cysteine 123, cysteine 126, and cysteine 214.

This sequence belongs to the TtcA family. Homodimer. Requires Mg(2+) as cofactor. The cofactor is [4Fe-4S] cluster.

It is found in the cytoplasm. It catalyses the reaction cytidine(32) in tRNA + S-sulfanyl-L-cysteinyl-[cysteine desulfurase] + AH2 + ATP = 2-thiocytidine(32) in tRNA + L-cysteinyl-[cysteine desulfurase] + A + AMP + diphosphate + H(+). The protein operates within tRNA modification. Catalyzes the ATP-dependent 2-thiolation of cytidine in position 32 of tRNA, to form 2-thiocytidine (s(2)C32). The sulfur atoms are provided by the cysteine/cysteine desulfurase (IscS) system. In Vibrio cholerae serotype O1 (strain ATCC 39315 / El Tor Inaba N16961), this protein is tRNA-cytidine(32) 2-sulfurtransferase.